A 212-amino-acid polypeptide reads, in one-letter code: Disintegrin-like halysetin (212 aa).

The 87-residue stretch at 4–90 (PPVCGNELLE…ECPADVFHKN (87 aa)) folds into the Disintegrin domain. 9 disulfide bridges follow: Cys-7–Cys-26, Cys-18–Cys-36, Cys-62–Cys-82, Cys-69–Cys-94, Cys-101–Cys-106, Cys-113–Cys-128, Cys-151–Cys-158, Cys-163–Cys-174, and Cys-200–Cys-205. The short motif at 68-70 (ECD) is the D/ECD-tripeptide element.

The protein belongs to the venom metalloproteinase (M12B) family. P-III subfamily. P-IIIb sub-subfamily. Monomer. In terms of tissue distribution, expressed by the venom gland.

Its subcellular location is the secreted. Its function is as follows. Inhibits human platelet aggregation stimulated by collagen with an IC(50) of 420 nM. The polypeptide is Disintegrin-like halysetin (Gloydius halys (Chinese water mocassin)).